A 375-amino-acid polypeptide reads, in one-letter code: Nucleolysin TIAR (375 aa).

RRM domains follow at residues 9-85 (RTLY…WATT) and 97-175 (FHVF…WATR). K122 bears the N6-acetyllysine mark. S201 carries the phosphoserine modification. In terms of domain architecture, RRM 3 spans 205–277 (CTVYCGGIAS…HVVKCYWGKE (73 aa)). A disordered region spans residues 345 to 375 (FGAQPPQGQAPPPVIPPPNQAGYGMASYQTQ). The span at 352–363 (GQAPPPVIPPPN) shows a compositional bias: pro residues.

As to quaternary structure, interacts with FASTK. Post-translationally, phosphorylated by MAPK14 following DNA damage, releasing TIAR from GADD45A mRNA. Expressed in brain, heart, kidney, lung and skeletal muscle.

The protein resides in the nucleus. It localises to the cytoplasm. The protein localises to the cytolytic granule. Its subcellular location is the stress granule. RNA-binding protein involved in alternative pre-RNA splicing and in cytoplasmic stress granules formation. Shows a preference for uridine-rich RNAs. Activates splicing of alternative exons with weak 5' splice sites followed by a U-rich stretch on its own pre-mRNA and on TIA1 mRNA. Promotes the inclusion of TIA1 exon 5 to give rise to the long isoform (isoform a) of TIA1. Acts downstream of the stress-induced phosphorylation of EIF2S1/EIF2A to promote the recruitment of untranslated mRNAs to cytoplasmic stress granules (SG). Possesses nucleolytic activity against cytotoxic lymphocyte target cells. May be involved in apoptosis. The sequence is that of Nucleolysin TIAR (TIAL1) from Homo sapiens (Human).